Consider the following 543-residue polypeptide: Phosphatidylinositol/phosphatidylcholine transfer protein SFH12 (543 aa).

A CRAL-TRIO domain is found at 120 to 294; the sequence is EIDEVLKYYP…FLGGSCTCAD (175 aa). The tract at residues 316-356 is disordered; that stretch reads HNGDHKCSKGSQAENSGEKTIPEEDDSTTEPASEEEKASKE. Residues 490-526 adopt a coiled-coil conformation; that stretch reads DKEEMLNAAISRSNVLEQELAATKKALDDSLGRQEEL.

Belongs to the SFH family. As to expression, specifically expressed in flowers.

It localises to the golgi apparatus membrane. Its subcellular location is the cell membrane. Required for transport of secretory proteins from the Golgi complex. Catalyzes the transfer of phosphatidylinositol and phosphatidylcholine between membranes in vitro. The chain is Phosphatidylinositol/phosphatidylcholine transfer protein SFH12 (SFH12) from Arabidopsis thaliana (Mouse-ear cress).